The following is a 119-amino-acid chain: Probable prefoldin subunit 6 (119 aa).

Belongs to the prefoldin subunit beta family. In terms of assembly, heterohexamer of two PFD-alpha type and four PFD-beta type subunits. May interact with MSP1.

Functionally, binds specifically to cytosolic chaperonin (c-CPN) and transfers target proteins to it. Binds to nascent polypeptide chain and promotes folding in an environment in which there are many competing pathways for nonnative proteins. This Plasmodium falciparum (isolate 3D7) protein is Probable prefoldin subunit 6.